The primary structure comprises 148 residues: Small ribosomal subunit protein eS19 (148 aa).

Over residues 79–90 the composition is skewed to basic residues; the sequence is HGSTKNRGSRPA. 2 disordered regions span residues 79–98 and 116–148; these read HGSTKNRGSRPAHHVDASGA and DEEKGGRRITQSGQRDLDRIAKTTVDEEEEDDE. Basic and acidic residues predominate over residues 130–140; the sequence is RDLDRIAKTTV.

Belongs to the eukaryotic ribosomal protein eS19 family.

This Emericella nidulans (strain FGSC A4 / ATCC 38163 / CBS 112.46 / NRRL 194 / M139) (Aspergillus nidulans) protein is Small ribosomal subunit protein eS19 (rps19).